The chain runs to 435 residues: Nicotinate phosphoribosyltransferase (435 aa).

Histidine 230 carries the phosphohistidine; by autocatalysis modification.

This sequence belongs to the NAPRTase family. Transiently phosphorylated on a His residue during the reaction cycle. Phosphorylation strongly increases the affinity for substrates and increases the rate of nicotinate D-ribonucleotide production. Dephosphorylation regenerates the low-affinity form of the enzyme, leading to product release.

It catalyses the reaction nicotinate + 5-phospho-alpha-D-ribose 1-diphosphate + ATP + H2O = nicotinate beta-D-ribonucleotide + ADP + phosphate + diphosphate. The protein operates within cofactor biosynthesis; NAD(+) biosynthesis; nicotinate D-ribonucleotide from nicotinate: step 1/1. Its function is as follows. Catalyzes the synthesis of beta-nicotinate D-ribonucleotide from nicotinate and 5-phospho-D-ribose 1-phosphate at the expense of ATP. The protein is Nicotinate phosphoribosyltransferase of Vibrio cholerae serotype O1 (strain ATCC 39541 / Classical Ogawa 395 / O395).